The chain runs to 342 residues: Ketol-acid reductoisomerase (NADP(+)) (342 aa).

The region spanning alanine 2 to threonine 182 is the KARI N-terminal Rossmann domain. NADP(+) is bound by residues tyrosine 25 to glutamine 28, arginine 48, serine 51, serine 53, and aspartate 83 to glutamine 86. Residue histidine 108 is part of the active site. Glycine 134 is a binding site for NADP(+). Residues serine 183 to leucine 328 enclose the KARI C-terminal knotted domain. Mg(2+) is bound by residues aspartate 191, glutamate 195, glutamate 227, and glutamate 231. Residue serine 252 participates in substrate binding.

The protein belongs to the ketol-acid reductoisomerase family. It depends on Mg(2+) as a cofactor.

The enzyme catalyses (2R)-2,3-dihydroxy-3-methylbutanoate + NADP(+) = (2S)-2-acetolactate + NADPH + H(+). The catalysed reaction is (2R,3R)-2,3-dihydroxy-3-methylpentanoate + NADP(+) = (S)-2-ethyl-2-hydroxy-3-oxobutanoate + NADPH + H(+). The protein operates within amino-acid biosynthesis; L-isoleucine biosynthesis; L-isoleucine from 2-oxobutanoate: step 2/4. It participates in amino-acid biosynthesis; L-valine biosynthesis; L-valine from pyruvate: step 2/4. In terms of biological role, involved in the biosynthesis of branched-chain amino acids (BCAA). Catalyzes an alkyl-migration followed by a ketol-acid reduction of (S)-2-acetolactate (S2AL) to yield (R)-2,3-dihydroxy-isovalerate. In the isomerase reaction, S2AL is rearranged via a Mg-dependent methyl migration to produce 3-hydroxy-3-methyl-2-ketobutyrate (HMKB). In the reductase reaction, this 2-ketoacid undergoes a metal-dependent reduction by NADPH to yield (R)-2,3-dihydroxy-isovalerate. The chain is Ketol-acid reductoisomerase (NADP(+)) from Cutibacterium acnes (strain DSM 16379 / KPA171202) (Propionibacterium acnes).